The sequence spans 129 residues: Short-chain dehydrogenase/reductase homolog YusR (129 aa).

This sequence belongs to the short-chain dehydrogenases/reductases (SDR) family.

In Bacillus subtilis (strain 168), this protein is Short-chain dehydrogenase/reductase homolog YusR (yusR).